The chain runs to 449 residues: Deoxyguanosinetriphosphate triphosphohydrolase-like protein (449 aa).

Residues Met-1–Arg-27 form a disordered region. A compositionally biased stretch (basic and acidic residues) spans Gln-7–Arg-27. The HD domain maps to Arg-59–Ala-255.

It belongs to the dGTPase family. Type 2 subfamily.

This chain is Deoxyguanosinetriphosphate triphosphohydrolase-like protein, found in Shewanella baltica (strain OS195).